We begin with the raw amino-acid sequence, 482 residues long: tRNA sulfurtransferase (482 aa).

A THUMP domain is found at 61-165 (PVIADALTRI…NDKLMLVKAR (105 aa)). ATP-binding positions include 183-184 (LI), Lys265, Gly287, and Gln296. A disulfide bridge connects residues Cys344 and Cys456. Positions 404-482 (FDADQVILDI…GFTNVKVYRP (79 aa)) constitute a Rhodanese domain. Cys456 functions as the Cysteine persulfide intermediate in the catalytic mechanism.

It belongs to the ThiI family.

It is found in the cytoplasm. It carries out the reaction [ThiI sulfur-carrier protein]-S-sulfanyl-L-cysteine + a uridine in tRNA + 2 reduced [2Fe-2S]-[ferredoxin] + ATP + H(+) = [ThiI sulfur-carrier protein]-L-cysteine + a 4-thiouridine in tRNA + 2 oxidized [2Fe-2S]-[ferredoxin] + AMP + diphosphate. The catalysed reaction is [ThiS sulfur-carrier protein]-C-terminal Gly-Gly-AMP + S-sulfanyl-L-cysteinyl-[cysteine desulfurase] + AH2 = [ThiS sulfur-carrier protein]-C-terminal-Gly-aminoethanethioate + L-cysteinyl-[cysteine desulfurase] + A + AMP + 2 H(+). It participates in cofactor biosynthesis; thiamine diphosphate biosynthesis. Catalyzes the ATP-dependent transfer of a sulfur to tRNA to produce 4-thiouridine in position 8 of tRNAs, which functions as a near-UV photosensor. Also catalyzes the transfer of sulfur to the sulfur carrier protein ThiS, forming ThiS-thiocarboxylate. This is a step in the synthesis of thiazole, in the thiamine biosynthesis pathway. The sulfur is donated as persulfide by IscS. The chain is tRNA sulfurtransferase from Serratia proteamaculans (strain 568).